Here is a 349-residue protein sequence, read N- to C-terminus: Isopentenyl-diphosphate delta-isomerase (349 aa).

Substrate is bound at residue 12–13 (RK). FMN contacts are provided by residues Ser69, 70–72 (SMT), Ser101, and Asn129. 101-103 (SQR) is a binding site for substrate. Position 164 (Gln164) interacts with substrate. Glu165 lines the Mg(2+) pocket. FMN contacts are provided by residues Lys196, Thr226, 279–281 (GIR), and 300–301 (AA).

The protein belongs to the IPP isomerase type 2 family. As to quaternary structure, homooctamer. Dimer of tetramers. FMN is required as a cofactor. Requires NADPH as cofactor. Mg(2+) serves as cofactor.

The protein localises to the cytoplasm. It catalyses the reaction isopentenyl diphosphate = dimethylallyl diphosphate. Its function is as follows. Involved in the biosynthesis of isoprenoids. Catalyzes the 1,3-allylic rearrangement of the homoallylic substrate isopentenyl (IPP) to its allylic isomer, dimethylallyl diphosphate (DMAPP). This chain is Isopentenyl-diphosphate delta-isomerase, found in Paracoccus zeaxanthinifaciens.